A 254-amino-acid polypeptide reads, in one-letter code: Long form salivary protein D7LC (254 aa).

Residues 1-19 form the signal peptide; the sequence is MNAVITSLLFLSLVGLGYS. Disulfide bonds link Cys36-Cys66 and Cys62-Cys112. Trp49 is a thromboxane A2 binding site. Residue Trp52 participates in leukotriene C4 binding. Tyr63 contributes to the thromboxane A2 binding site. Gly136 and Lys154 together coordinate leukotriene C4. Lys154 contributes to the thromboxane A2 binding site. Disulfide bonds link Cys162–Cys178, Cys174–Cys221, and Cys211–Cys230.

Belongs to the PBP/GOBP family.

It localises to the secreted. Its function is as follows. Modulates blood feeding of female sandflies on vertebrate species by binding and sequestering different mediators involved in the host response. Binds leukotriene C4, leukotriene D4, leukotriene E4 and U-46619, a stable analog of thromboxane A2. Does not bind histamine or serotonin. Inhibits platelet aggregation induced by low concentrations of collagen in thromboxane A2-dependent manner. The polypeptide is Long form salivary protein D7LC (Phlebotomus papatasi (Sandfly)).